Consider the following 417-residue polypeptide: RH-like protein (417 aa).

The next 11 membrane-spanning stretches (helical) occupy residues 12-32 (CLPL…FFFT), 44-64 (LVAS…GLGF), 77-97 (VAFN…LDGF), 125-145 (ISMN…MELV), 172-192 (IHVF…KPLP), 203-223 (TSPS…WPTF), 238-258 (VFST…VSSL), 265-285 (INMT…SASC), 287-307 (VIHS…ISIG), 331-351 (TFGL…ALRV), and 358-378 (MIGF…AMSI).

Belongs to the ammonium transporter (TC 2.A.49) family. Rh subfamily.

Its subcellular location is the membrane. May be part of an oligomeric complex which is likely to have a transport or channel function in the erythrocyte membrane. This Macaca mulatta (Rhesus macaque) protein is RH-like protein.